The primary structure comprises 148 residues: MGRFIFVSFGLLVVFLSLSGTEAGVCCPLGWSGYDQNCYKAFEELMNWADAEKFCTQQHKGSHLVSLHNIAEADFVVKKIVSVLKDGVIWMGLNDVWNECNWGWTDGAQLDYKAWNVESNCFIFKTAENHWSRTDCSGTHSFVCKSPA.

An N-terminal signal peptide occupies residues 1–23 (MGRFIFVSFGLLVVFLSLSGTEA). 3 cysteine pairs are disulfide-bonded: Cys27–Cys38, Cys55–Cys144, and Cys121–Cys136. Positions 34–145 (YDQNCYKAFE…CSGTHSFVCK (112 aa)) constitute a C-type lectin domain.

This sequence belongs to the snaclec family. Heterodimer; disulfide-linked. As to expression, expressed by the venom gland.

The protein resides in the secreted. Functionally, interferes with one step of hemostasis (modulation of platelet aggregation, or coagulation cascade, for example). This is Snaclec 2 from Echis ocellatus (Ocellated saw-scaled viper).